Consider the following 871-residue polypeptide: DNA mismatch repair protein MutS (871 aa).

Gly-617–Ser-624 contributes to the ATP binding site.

Belongs to the DNA mismatch repair MutS family.

This protein is involved in the repair of mismatches in DNA. It is possible that it carries out the mismatch recognition step. This protein has a weak ATPase activity. The sequence is that of DNA mismatch repair protein MutS from Hydrogenovibrio crunogenus (strain DSM 25203 / XCL-2) (Thiomicrospira crunogena).